We begin with the raw amino-acid sequence, 478 residues long: Uronate isomerase (478 aa).

This sequence belongs to the metallo-dependent hydrolases superfamily. Uronate isomerase family.

It carries out the reaction D-glucuronate = D-fructuronate. The catalysed reaction is aldehydo-D-galacturonate = keto-D-tagaturonate. It participates in carbohydrate metabolism; pentose and glucuronate interconversion. The polypeptide is Uronate isomerase (Bacillus pumilus (strain SAFR-032)).